A 333-amino-acid polypeptide reads, in one-letter code: Homoserine O-succinyltransferase (333 aa).

The active-site Acyl-thioester intermediate is the C147. Substrate-binding residues include K168 and S196. Residue H239 is the Proton acceptor of the active site. E241 is an active-site residue. R253 contacts substrate.

Belongs to the MetA family.

Its subcellular location is the cytoplasm. It carries out the reaction L-homoserine + succinyl-CoA = O-succinyl-L-homoserine + CoA. It participates in amino-acid biosynthesis; L-methionine biosynthesis via de novo pathway; O-succinyl-L-homoserine from L-homoserine: step 1/1. Its function is as follows. Transfers a succinyl group from succinyl-CoA to L-homoserine, forming succinyl-L-homoserine. This Rhodopseudomonas palustris protein is Homoserine O-succinyltransferase.